The sequence spans 398 residues: Nucleotide-sugar uncharacterized transporter 2 (398 aa).

The next 10 helical transmembrane spans lie at Phe-54–Ala-74, Phe-84–Phe-104, Thr-119–Ala-139, Phe-150–Phe-170, Val-179–Phe-199, Leu-201–Trp-221, Phe-242–Phe-262, Ala-271–Gly-291, Val-299–Ser-319, and Gly-322–Leu-342.

The protein belongs to the TPT transporter family. TPT (TC 2.A.7.9) subfamily.

The protein resides in the membrane. This Arabidopsis thaliana (Mouse-ear cress) protein is Nucleotide-sugar uncharacterized transporter 2.